The following is a 169-amino-acid chain: Cell division inhibitor SulA (169 aa).

The interval Ala-106–Tyr-112 is ftsZ binding. Positions Lys-162–His-169 are lon protease binding.

This sequence belongs to the SulA family. Interacts with FtsZ. Post-translationally, is rapidly cleaved and degraded by the Lon protease once DNA damage is repaired.

Its function is as follows. Component of the SOS system and an inhibitor of cell division. Accumulation of SulA causes rapid cessation of cell division and the appearance of long, non-septate filaments. In the presence of GTP, binds a polymerization-competent form of FtsZ in a 1:1 ratio, thus inhibiting FtsZ polymerization and therefore preventing it from participating in the assembly of the Z ring. This mechanism prevents the premature segregation of damaged DNA to daughter cells during cell division. The sequence is that of Cell division inhibitor SulA from Salmonella choleraesuis (strain SC-B67).